The following is a 201-amino-acid chain: MYIGRFLVFGKTEEGYPFVTYRVSSRSFPNRLAKVMDDDTVSILPKELEEMFKNPYITYNCVKLVGDVAVATNGSHTDIIADKIKLGLPIRDALSYSLLTMDYEKDDYNTPRIAVVITKDEAYMGYVTDSDVRIKKVELEAGKAYYLGVYDACKITEHQVISVTGKTAEDLTKFVMDYEEFEKPVTAATVLVKDGFKLATL.

It belongs to the archaeal IMP cyclohydrolase family.

The enzyme catalyses IMP + H2O = 5-formamido-1-(5-phospho-D-ribosyl)imidazole-4-carboxamide. It participates in purine metabolism; IMP biosynthesis via de novo pathway; IMP from 5-formamido-1-(5-phospho-D-ribosyl)imidazole-4-carboxamide: step 1/1. Functionally, catalyzes the cyclization of 5-formylamidoimidazole-4-carboxamide ribonucleotide to IMP. This chain is IMP cyclohydrolase, found in Methanococcus maripaludis (strain C5 / ATCC BAA-1333).